The chain runs to 84 residues: uncharacterized protein (84 aa).

The next 2 helical transmembrane spans lie at 27 to 47 (INHHTWHIVGLFAIGLLLAML) and 52 to 72 (IGHVENWYLIGFAALVFFVLI).

The protein to M.tuberculosis Rv2876.

The protein resides in the cell membrane. This is an uncharacterized protein from Mycobacterium leprae (strain TN).